The primary structure comprises 465 residues: UDP-N-acetylmuramate--L-alanine ligase (465 aa).

112-118 (GTHGKTT) serves as a coordination point for ATP.

This sequence belongs to the MurCDEF family.

It localises to the cytoplasm. The enzyme catalyses UDP-N-acetyl-alpha-D-muramate + L-alanine + ATP = UDP-N-acetyl-alpha-D-muramoyl-L-alanine + ADP + phosphate + H(+). It functions in the pathway cell wall biogenesis; peptidoglycan biosynthesis. Its function is as follows. Cell wall formation. In Burkholderia mallei (strain NCTC 10247), this protein is UDP-N-acetylmuramate--L-alanine ligase.